Reading from the N-terminus, the 353-residue chain is Ribosome biogenesis protein BRX1 homolog (353 aa).

The tract at residues 1–50 is disordered; the sequence is MAATKRKRRGGLEVQAKKPKRSSKDAGQPAKQADVAKEAEEENRDRIPGP. A compositionally biased stretch (basic and acidic residues) spans 34 to 47; the sequence is DVAKEAEEENRDRI. Residues 60 to 249 enclose the Brix domain; the sequence is ERILIFSSRG…LIKIFQGSFG (190 aa). Lys-160 participates in a covalent cross-link: Glycyl lysine isopeptide (Lys-Gly) (interchain with G-Cter in SUMO2). Ser-261 carries the post-translational modification Phosphoserine. The residue at position 276 (Lys-276) is an N6-acetyllysine. Glycyl lysine isopeptide (Lys-Gly) (interchain with G-Cter in SUMO2) cross-links involve residues Lys-314 and Lys-322. The span at 334-344 shows a compositional bias: basic residues; sequence RRIYKRHRKLQ. The tract at residues 334 to 353 is disordered; it reads RRIYKRHRKLQQKMSRGSAK.

The protein belongs to the BRX1 family.

It is found in the nucleus. Its subcellular location is the nucleolus. Its function is as follows. Required for biogenesis of the 60S ribosomal subunit. This is Ribosome biogenesis protein BRX1 homolog (Brix1) from Mus musculus (Mouse).